A 632-amino-acid polypeptide reads, in one-letter code: Dihydrolipoyllysine-residue acetyltransferase component of pyruvate dehydrogenase complex, mitochondrial (632 aa).

The N-terminal 77 residues, 1–77 (MWRVCARRVQ…LLGSPSRRSY (77 aa)), are a transit peptide targeting the mitochondrion. 2 Lipoyl-binding domains span residues 82–158 (HQKV…CITV) and 208–284 (HMQI…CIIV). At Ser91 the chain carries Phosphoserine. N6-lipoyllysine occurs at positions 123 and 249. One can recognise a Peripheral subunit-binding (PSBD) domain in the interval 342–379 (FVSPLAKKLAAEKGIDLTQVKGTGPEGRIIKKDIDSFV). Arg446 lines the CoA pocket. N6-acetyllysine is present on Lys451. N6-succinyllysine is present on Lys458. Ser460 contacts CoA. At Lys532 the chain carries N6-succinyllysine. Residues Ser551, Asn552, and Gly576 each coordinate CoA. Active-site residues include His605 and Asp609.

It belongs to the 2-oxoacid dehydrogenase family. As to quaternary structure, part of the pyruvate dehydrogenase complex (PDHc) that is a multi-enzyme complex composed of multiple copies of three enzymes, pyruvate dehydrogenase (subunits PDH1A and PDHB, E1 component), dihydrolipoamide acetyltransferase (DLAT, E2 component), and dihydrolipoamide dehydrogenase (DLD, E3 component) to which is added an additional protein the E3-binding protein (PDHX, E3BP). In terms of structural architecture, the E2 and E3BP components assemble into a 60meric central core with icosahedral symmetry. The central core is decorated with E1 and E3 proteins. Currently, two alternative models for the E2:E3BP stoichiometry are considered as being either 48:12 (E2(48)-E3BP(12)) or 40:20 (E2(40)-E3BP(20)). Interacts with PDK2 and PDK3. Interacts with SIRT4. Interacts with PDHB. It depends on (R)-lipoate as a cofactor. Post-translationally, delipoylated at Lys-123 and Lys-249 by SIRT4, delipoylation decreases the PHD complex activity. Expressed in flagella of epididymal sperm.

It localises to the mitochondrion matrix. The enzyme catalyses N(6)-[(R)-dihydrolipoyl]-L-lysyl-[protein] + acetyl-CoA = N(6)-[(R)-S(8)-acetyldihydrolipoyl]-L-lysyl-[protein] + CoA. As part of the pyruvate dehydrogenase complex, catalyzes the transfers of an acetyl group to a lipoic acid moiety. The pyruvate dehydrogenase complex, catalyzes the overall conversion of pyruvate to acetyl-CoA and CO(2), and thereby links cytoplasmic glycolysis and the mitochondrial tricarboxylic acid (TCA) cycle. This Rattus norvegicus (Rat) protein is Dihydrolipoyllysine-residue acetyltransferase component of pyruvate dehydrogenase complex, mitochondrial.